Consider the following 876-residue polypeptide: Valine--tRNA ligase (876 aa).

The 'HIGH' region signature appears at 44–54; sequence PNVTGKLHLGH. A 'KMSKS' region motif is present at residues 520 to 524; that stretch reads KMSKS. Position 523 (Lys-523) interacts with ATP. Residues 805 to 876 are a coiled coil; it reads LEGLIDMDKE…VKARIEQLKA (72 aa).

It belongs to the class-I aminoacyl-tRNA synthetase family. ValS type 1 subfamily. As to quaternary structure, monomer.

It localises to the cytoplasm. It carries out the reaction tRNA(Val) + L-valine + ATP = L-valyl-tRNA(Val) + AMP + diphosphate. Its function is as follows. Catalyzes the attachment of valine to tRNA(Val). As ValRS can inadvertently accommodate and process structurally similar amino acids such as threonine, to avoid such errors, it has a 'posttransfer' editing activity that hydrolyzes mischarged Thr-tRNA(Val) in a tRNA-dependent manner. The polypeptide is Valine--tRNA ligase (Staphylococcus aureus (strain MRSA252)).